Reading from the N-terminus, the 184-residue chain is MGIEEKIPGGFLLTTVEKAVGWVRKSSLWPATFGLACCAIEMMATGAGRYDLARFGMEVFRASPRQADLMIVAGRVSQKMAPVLRQIYDQMPEPKWVLAMGVCASSGGMFNNYAIVQGVDHVVPVDMYLPGCPPRPEMLMHAILELHEKIKSTKLGVHAVREAHEREEAAKHALPTHSMKGLLR.

4 residues coordinate [4Fe-4S] cluster: cysteine 37, cysteine 38, cysteine 103, and cysteine 132. Residues 164 to 184 (HEREEAAKHALPTHSMKGLLR) form a disordered region.

Belongs to the complex I 20 kDa subunit family. As to quaternary structure, NDH-1 is composed of 14 different subunits. Subunits NuoB, C, D, E, F, and G constitute the peripheral sector of the complex. The cofactor is [4Fe-4S] cluster.

Its subcellular location is the cell membrane. It catalyses the reaction a quinone + NADH + 5 H(+)(in) = a quinol + NAD(+) + 4 H(+)(out). Functionally, NDH-1 shuttles electrons from NADH, via FMN and iron-sulfur (Fe-S) centers, to quinones in the respiratory chain. The immediate electron acceptor for the enzyme in this species is believed to be a menaquinone. Couples the redox reaction to proton translocation (for every two electrons transferred, four hydrogen ions are translocated across the cytoplasmic membrane), and thus conserves the redox energy in a proton gradient. The protein is NADH-quinone oxidoreductase subunit B of Acidothermus cellulolyticus (strain ATCC 43068 / DSM 8971 / 11B).